A 590-amino-acid polypeptide reads, in one-letter code: Aspartate--tRNA(Asp/Asn) ligase (590 aa).

Glu-172 lines the L-aspartate pocket. Residues 196-199 are aspartate; it reads QLFK. L-aspartate is bound at residue Arg-218. ATP-binding positions include 218–220 and Gln-227; that span reads RDE. His-449 lines the L-aspartate pocket. Glu-484 contributes to the ATP binding site. Arg-491 contacts L-aspartate. Residue 536-539 participates in ATP binding; the sequence is GVDR.

It belongs to the class-II aminoacyl-tRNA synthetase family. Type 1 subfamily. Homodimer.

The protein localises to the cytoplasm. It catalyses the reaction tRNA(Asx) + L-aspartate + ATP = L-aspartyl-tRNA(Asx) + AMP + diphosphate. In terms of biological role, aspartyl-tRNA synthetase with relaxed tRNA specificity since it is able to aspartylate not only its cognate tRNA(Asp) but also tRNA(Asn). Reaction proceeds in two steps: L-aspartate is first activated by ATP to form Asp-AMP and then transferred to the acceptor end of tRNA(Asp/Asn). The protein is Aspartate--tRNA(Asp/Asn) ligase of Francisella tularensis subsp. tularensis (strain WY96-3418).